The chain runs to 549 residues: MKNINFNNTQSYQDLKNHFRKIKNIHLRDLFASDLNRFKKFSIIFENEMLIDFSKNRITDETLIYLLNLAKETDVKSGIKLMFSGAKINKTENRSVLHIALRNRTNRPIILNNCNIMLEVNALLEKMKNFSKMVIHGEWKGYTGKSISNVVNIGIGGSDLGPYMVTEALRPYKNHLNMYYVSNIDGTHLTEVLKKINPENTIFLIASKTFTTDETITNAHSAKKWFLHYSQDQSTLDKHFFALSANIKNALNFGININNIFKFWDWVGGRFSLWSSAGLSIMLSIGFDNFEKFLDGAHAMDNHFYHTNYKENIPILLALISIWYTNFFGSETEAIFPYDQYMHRFSAYFQQSNMESNGKSINRNGQRINYQTGPIIWGEPGTNGQHAFYQLIHQGTRLIPCDFIAPVFSHNDLNNHHMKLISNFFAQTQALAFGQSRDSILHRLILSKKNQDDIKRILPFKICKGNQPTNSILIRKITPYNLGALIALYEHKIFVQGYILNIFSFDQWGVELGKELSQNIYNYLNINIKNKSYDASTEGLINFYKSFMI.

Glu355 acts as the Proton donor in catalysis. Catalysis depends on residues His386 and Lys514.

It belongs to the GPI family.

It localises to the cytoplasm. It carries out the reaction alpha-D-glucose 6-phosphate = beta-D-fructose 6-phosphate. The protein operates within carbohydrate biosynthesis; gluconeogenesis. Its pathway is carbohydrate degradation; glycolysis; D-glyceraldehyde 3-phosphate and glycerone phosphate from D-glucose: step 2/4. Functionally, catalyzes the reversible isomerization of glucose-6-phosphate to fructose-6-phosphate. The chain is Glucose-6-phosphate isomerase from Buchnera aphidicola subsp. Acyrthosiphon pisum (strain 5A).